We begin with the raw amino-acid sequence, 199 residues long: MKKILLTGFVPFLDNPINPTEEIVQGLHKKSVNGWEVVGEVLPVDFHVTGDHLVELIHKVQPSAIISLGLAAGRNRITPERIAINCNDGPVDNQGYKPDGEKIISDGPDGYFSSLPIKKMVKELENNGIPAKISNTAGAYLCNHVMYRALHEIEQQKLDIFSGFIHIPASHKLALTNNIPSFAQKDLQRAIEICIGCLD.

Residues Glu80, Cys142, and His166 contribute to the active site.

The protein belongs to the peptidase C15 family. As to quaternary structure, homotetramer.

It is found in the cytoplasm. It catalyses the reaction Release of an N-terminal pyroglutamyl group from a polypeptide, the second amino acid generally not being Pro.. Its function is as follows. Removes 5-oxoproline from various penultimate amino acid residues except L-proline. This is Pyrrolidone-carboxylate peptidase from Oceanobacillus iheyensis (strain DSM 14371 / CIP 107618 / JCM 11309 / KCTC 3954 / HTE831).